A 449-amino-acid polypeptide reads, in one-letter code: UDP-glycosyltransferase 76E6 (449 aa).

UDP-alpha-D-glucose-binding positions include Ser-274, 333 to 335 (APQ), 350 to 358 (HCGWNSTLE), and 372 to 375 (HGEQ).

It belongs to the UDP-glycosyltransferase family.

This is UDP-glycosyltransferase 76E6 (UGT76E6) from Arabidopsis thaliana (Mouse-ear cress).